The chain runs to 269 residues: Putative hydro-lyase Swoo_1731 (269 aa).

It belongs to the D-glutamate cyclase family.

This chain is Putative hydro-lyase Swoo_1731, found in Shewanella woodyi (strain ATCC 51908 / MS32).